The chain runs to 625 residues: Cytochrome c oxidase subunit 1 (625 aa).

Residues 23-43 form a helical membrane-spanning segment; that stretch reads IAIMYLIAGTLFFVKAGVMAL. Histidine 69 contributes to the Fe(II)-heme a binding site. The next 6 helical transmembrane spans lie at 72–92, 99–119, 151–171, 195–215, 240–260, and 272–292; these read IMLFLAATPLLFAFMNYVIPL, VAFPFVNALGFWIFFFGGLLL, FYVLGLQVSGIGTLISAINFL, FISSTLILFAFTPLAAGLALL, IFWIFGHPEVYILVLPAFGII, and LFGYTAMVFATMIIAFLGFMV. Cu cation is bound by residues histidine 246 and tyrosine 250. Positions 246–250 form a cross-link, 1'-histidyl-3'-tyrosine (His-Tyr); that stretch reads HPEVY. Cu cation contacts are provided by histidine 295 and histidine 296. Helical transmembrane passes span 309–329 and 343–363; these read IFAVATMTIAVPTGIKIFNWL and MLFASSFVPTFVLGGVTGVML. Histidine 381 contacts heme a3. 5 helical membrane passes run 382-402, 417-437, 460-480, 551-571, and 577-597; these read FHYIIVGGIVLSLFAGLFYWY, LFFWVFYIGFHLTFFVQHLLG, ISTIGTFFMSAGVILLVINVI, SILPFIMSIGLFFAGFGLIML, and IINPWIVAIGGLALTFGCMFV. Histidine 383 contributes to the Fe(II)-heme a binding site.

It belongs to the heme-copper respiratory oxidase family.

It is found in the cell membrane. It catalyses the reaction 4 Fe(II)-[cytochrome c] + O2 + 8 H(+)(in) = 4 Fe(III)-[cytochrome c] + 2 H2O + 4 H(+)(out). It participates in energy metabolism; oxidative phosphorylation. Functionally, cytochrome c oxidase is the component of the respiratory chain that catalyzes the reduction of oxygen to water. Subunits 1-3 form the functional core of the enzyme complex. CO I is the catalytic subunit of the enzyme. Electrons originating in cytochrome c are transferred via the copper A center of subunit 2 and heme A of subunit 1 to the bimetallic center formed by heme A3 and copper B. This Alkalihalophilus pseudofirmus (strain ATCC BAA-2126 / JCM 17055 / OF4) (Bacillus pseudofirmus) protein is Cytochrome c oxidase subunit 1 (ctaD).